A 123-amino-acid polypeptide reads, in one-letter code: Small ribosomal subunit protein uS12 (123 aa).

Asp89 is subject to 3-methylthioaspartic acid. The disordered stretch occupies residues 101–123 (TLDTSGVSDRRQSRSKYGAKRPK). Residues 113–123 (SRSKYGAKRPK) are compositionally biased toward basic residues.

Belongs to the universal ribosomal protein uS12 family. As to quaternary structure, part of the 30S ribosomal subunit. Contacts proteins S8 and S17. May interact with IF1 in the 30S initiation complex.

Functionally, with S4 and S5 plays an important role in translational accuracy. Interacts with and stabilizes bases of the 16S rRNA that are involved in tRNA selection in the A site and with the mRNA backbone. Located at the interface of the 30S and 50S subunits, it traverses the body of the 30S subunit contacting proteins on the other side and probably holding the rRNA structure together. The combined cluster of proteins S8, S12 and S17 appears to hold together the shoulder and platform of the 30S subunit. The polypeptide is Small ribosomal subunit protein uS12 (Solidesulfovibrio magneticus (strain ATCC 700980 / DSM 13731 / RS-1) (Desulfovibrio magneticus)).